Reading from the N-terminus, the 137-residue chain is MPNFAGTWKMRSSENFDELLKALGVNAMLRKVAVAAASKPHVEIRQDGDQFYIKTSTTVRTTEINFKIGESFEEETVDGRKCRSLATWENENKIYCKQTLIEGDGPKTYWTRELANDELILTFGADDVVCTRIYVRE.

A Nuclear localization signal motif is present at residues 21 to 31; it reads KALGVNAMLRK. Residue 132–134 participates in all-trans-retinoate binding; sequence RIY.

It belongs to the calycin superfamily. Fatty-acid binding protein (FABP) family.

It localises to the cytoplasm. Its function is as follows. Cytosolic CRABPs may regulate the access of retinoic acid to the nuclear retinoic acid receptors. This chain is Cellular retinoic acid-binding protein 1 (CRABP1), found in Gallus gallus (Chicken).